Reading from the N-terminus, the 775-residue chain is Phenylalanine--tRNA ligase beta subunit (775 aa).

Residues 39–147 (GIDLDGVVFG…EDFKPGTDAN (109 aa)) form the tRNA-binding domain. Residues 394-470 (YKPKKVFLPQ…RVKGYEHYTS (77 aa)) form the B5 domain. Mg(2+) contacts are provided by Asp-448, Asp-454, Glu-457, and Glu-458. Residues 681-774 (AKFPPVVRDI…LKEKYGVELR (94 aa)) enclose the FDX-ACB domain.

The protein belongs to the phenylalanyl-tRNA synthetase beta subunit family. Type 1 subfamily. As to quaternary structure, tetramer of two alpha and two beta subunits. Mg(2+) is required as a cofactor.

The protein localises to the cytoplasm. It carries out the reaction tRNA(Phe) + L-phenylalanine + ATP = L-phenylalanyl-tRNA(Phe) + AMP + diphosphate + H(+). This is Phenylalanine--tRNA ligase beta subunit (pheT) from Aquifex aeolicus (strain VF5).